Reading from the N-terminus, the 574-residue chain is 2-succinyl-5-enolpyruvyl-6-hydroxy-3-cyclohexene-1-carboxylate synthase (574 aa).

Belongs to the TPP enzyme family. MenD subfamily. In terms of assembly, homodimer. It depends on Mg(2+) as a cofactor. Mn(2+) serves as cofactor. Requires thiamine diphosphate as cofactor.

The catalysed reaction is isochorismate + 2-oxoglutarate + H(+) = 5-enolpyruvoyl-6-hydroxy-2-succinyl-cyclohex-3-ene-1-carboxylate + CO2. It functions in the pathway quinol/quinone metabolism; 1,4-dihydroxy-2-naphthoate biosynthesis; 1,4-dihydroxy-2-naphthoate from chorismate: step 2/7. It participates in quinol/quinone metabolism; menaquinone biosynthesis. Its function is as follows. Catalyzes the thiamine diphosphate-dependent decarboxylation of 2-oxoglutarate and the subsequent addition of the resulting succinic semialdehyde-thiamine pyrophosphate anion to isochorismate to yield 2-succinyl-5-enolpyruvyl-6-hydroxy-3-cyclohexene-1-carboxylate (SEPHCHC). This is 2-succinyl-5-enolpyruvyl-6-hydroxy-3-cyclohexene-1-carboxylate synthase from Vibrio atlanticus (strain LGP32) (Vibrio splendidus (strain Mel32)).